A 587-amino-acid polypeptide reads, in one-letter code: Probable terpene synthase 12 (587 aa).

Residues D338, D342, and E489 each contribute to the Mg(2+) site. The short motif at 338 to 342 (DDVYD) is the DDXXD motif element.

This sequence belongs to the terpene synthase family. It depends on Mg(2+) as a cofactor.

Probable sesquiterpene synthase. This is Probable terpene synthase 12 (TPS12) from Ricinus communis (Castor bean).